Here is a 151-residue protein sequence, read N- to C-terminus: Large ribosomal subunit protein bL9 (151 aa).

Belongs to the bacterial ribosomal protein bL9 family.

Binds to the 23S rRNA. This is Large ribosomal subunit protein bL9 from Mycobacteroides abscessus (strain ATCC 19977 / DSM 44196 / CCUG 20993 / CIP 104536 / JCM 13569 / NCTC 13031 / TMC 1543 / L948) (Mycobacterium abscessus).